Consider the following 286-residue polypeptide: tRNA (guanine-N(7)-)-methyltransferase (286 aa).

Phosphoserine occurs at positions 7 and 59. S-adenosyl-L-methionine is bound by residues G103, 126–127 (EI), 161–162 (NA), and C181. D184 is an active-site residue. 259–261 (TEE) is a binding site for S-adenosyl-L-methionine.

This sequence belongs to the class I-like SAM-binding methyltransferase superfamily. TrmB family. Forms a complex with TRM82.

It localises to the nucleus. It carries out the reaction guanosine(46) in tRNA + S-adenosyl-L-methionine = N(7)-methylguanosine(46) in tRNA + S-adenosyl-L-homocysteine. It participates in tRNA modification; N(7)-methylguanine-tRNA biosynthesis. Its function is as follows. Methyltransferase that catalyzes the formation of N(7)-methylguanine at position 46 (m7G46) in tRNA, a modification required to maintain stability of tRNAs; its absence resulting in tRNA decay. Both the D-stem and T-stem structures of tRNAs are required for efficient methyltransferase activity. This Saccharomyces cerevisiae (strain RM11-1a) (Baker's yeast) protein is tRNA (guanine-N(7)-)-methyltransferase.